The following is a 401-amino-acid chain: MSDSAFSKDNRWLLPEGVDELLPPRAAQMETLRRQLLDQFGAWGYELVMPPFIEYLDSLLTGTGHDLDVQTFKLTDQLTGRLMGVRADITPQVARIDAHRLRREAPSRLCYIGSVLHARPEGISRSRNPVQVGAELFGHAGVESDIEIISLAVASLRTAGVAQPHLDLGHVGIFRGLARAAGCTPAQEGALLEALQRKAVAEIDELLDEAAIDPHLRRMLRALPQLNGGLEALDHAGEVLAEAPQGVRQALRTLWGVAAGLERRLPDLPLHFDLAELRGYGYHTGIVFAALVPGYGSEVARGGRYDDIGRVFGNPRPATGFSADLRTLVQVADGQPAVPAGKGVLAPWGDEPDLIKVIEALRAEGERVVQELPGQQGGAAAQGCDRRLQQDDGGGWVTRPL.

Residues 373–401 form a disordered region; it reads PGQQGGAAAQGCDRRLQQDDGGGWVTRPL. The segment covering 392–401 has biased composition (gly residues); it reads DGGGWVTRPL.

The protein belongs to the class-II aminoacyl-tRNA synthetase family. HisZ subfamily. In terms of assembly, heteromultimer composed of HisG and HisZ subunits.

It is found in the cytoplasm. The protein operates within amino-acid biosynthesis; L-histidine biosynthesis; L-histidine from 5-phospho-alpha-D-ribose 1-diphosphate: step 1/9. Functionally, required for the first step of histidine biosynthesis. May allow the feedback regulation of ATP phosphoribosyltransferase activity by histidine. This is ATP phosphoribosyltransferase regulatory subunit from Alkalilimnicola ehrlichii (strain ATCC BAA-1101 / DSM 17681 / MLHE-1).